The chain runs to 195 residues: Imidazole glycerol phosphate synthase subunit HisH (195 aa).

A Glutamine amidotransferase type-1 domain is found at 1–193; that stretch reads MIAIVDYGVG…RETTCNSTQQ (193 aa). The Nucleophile role is filled by cysteine 78. Active-site residues include histidine 168 and glutamate 170.

Heterodimer of HisH and HisF.

It is found in the cytoplasm. The catalysed reaction is 5-[(5-phospho-1-deoxy-D-ribulos-1-ylimino)methylamino]-1-(5-phospho-beta-D-ribosyl)imidazole-4-carboxamide + L-glutamine = D-erythro-1-(imidazol-4-yl)glycerol 3-phosphate + 5-amino-1-(5-phospho-beta-D-ribosyl)imidazole-4-carboxamide + L-glutamate + H(+). The enzyme catalyses L-glutamine + H2O = L-glutamate + NH4(+). It functions in the pathway amino-acid biosynthesis; L-histidine biosynthesis; L-histidine from 5-phospho-alpha-D-ribose 1-diphosphate: step 5/9. In terms of biological role, IGPS catalyzes the conversion of PRFAR and glutamine to IGP, AICAR and glutamate. The HisH subunit catalyzes the hydrolysis of glutamine to glutamate and ammonia as part of the synthesis of IGP and AICAR. The resulting ammonia molecule is channeled to the active site of HisF. The polypeptide is Imidazole glycerol phosphate synthase subunit HisH (Exiguobacterium sibiricum (strain DSM 17290 / CCUG 55495 / CIP 109462 / JCM 13490 / 255-15)).